Reading from the N-terminus, the 451-residue chain is Type 3 secretion system ATPase (451 aa).

Residue Gly-184–Thr-189 coordinates ATP.

This sequence belongs to the ATPase alpha/beta chains family. T3SS ATPase subfamily. As to quaternary structure, the core secretion machinery of the T3SS is composed of approximately 20 different proteins, including cytoplasmic components, a base, an export apparatus and a needle. This subunit is part of the cytosolic complex. Forms homohexamers.

Its subcellular location is the cytoplasm. The enzyme catalyses ATP + H2O + cellular proteinSide 1 = ADP + phosphate + cellular proteinSide 2.. Functionally, ATPase component of the type III secretion system (T3SS), also called injectisome, which is used to inject bacterial effector proteins into eukaryotic host cells. Acts as a molecular motor to provide the energy that is required for the export of proteins. Required for type III secretion apparatus (T3SA) formation, proper protein secretion, host cell invasion and virulence. May play a critical role in T3SS substrate recognition, disassembly of the effector/chaperone complex and unfolding of the effector in an ATP-dependent manner prior to secretion. In Sinorhizobium fredii (strain NBRC 101917 / NGR234), this protein is Type 3 secretion system ATPase.